The sequence spans 346 residues: 4-hydroxy-2-oxovalerate aldolase (346 aa).

The 253-residue stretch at 8–260 folds into the Pyruvate carboxyltransferase domain; the sequence is VILHDMSLRD…ETGIDLYKIM (253 aa). 16-17 is a binding site for substrate; that stretch reads RD. Asp17 is a Mn(2+) binding site. The Proton acceptor role is filled by His20. Substrate-binding residues include Ser170 and His199. Positions 199 and 201 each coordinate Mn(2+). Tyr290 lines the substrate pocket.

It belongs to the 4-hydroxy-2-oxovalerate aldolase family.

The enzyme catalyses (S)-4-hydroxy-2-oxopentanoate = acetaldehyde + pyruvate. It participates in aromatic compound metabolism; naphthalene degradation. This is 4-hydroxy-2-oxovalerate aldolase (nahM) from Pseudomonas putida (Arthrobacter siderocapsulatus).